The primary structure comprises 194 residues: Protein LURP-one-related 10 (194 aa).

It belongs to the LOR family.

In terms of biological role, might be related to the phospholipid scramblase and tubby-like superfamily of membrane tethered transcription factors. The chain is Protein LURP-one-related 10 from Arabidopsis thaliana (Mouse-ear cress).